Here is a 327-residue protein sequence, read N- to C-terminus: MERYECLGKIGEGAAGVVHVARDRTTGETVAVKRLHGGIGCGEEEWLREARCLQACRGHPHLVELRAAHREMRRGGGGACCYVVMEYVDGPSLSRVVREERRGRPFPEAEARRLMRQLLDGVAAMHAAGVMHRDLKPDNVVVGPRGDLKICDFGMSRVTAAGAPPYTSPVVTLWYRAPELILGSQEYDSLVDTWSLGCIMAELLAGAPLFPGRSEMDQLNRVFDTVGMQDMKSWPGFARLPRAESALCSRARPPSRLREMFPKLSAAGFDVLSGLLACRPDRRLTAADALRCAWFTEADTPPDATPVTCGSARFTPCVSGVADAIVV.

Positions 4 to 295 (YECLGKIGEG…AADALRCAWF (292 aa)) constitute a Protein kinase domain. ATP is bound by residues 10-18 (IGEGAAGVV) and Lys33. The active-site Proton acceptor is Asp134. Thr167 carries the phosphothreonine modification.

Belongs to the protein kinase superfamily. CMGC Ser/Thr protein kinase family. CDC2/CDKX subfamily.

The catalysed reaction is L-seryl-[protein] + ATP = O-phospho-L-seryl-[protein] + ADP + H(+). It catalyses the reaction L-threonyl-[protein] + ATP = O-phospho-L-threonyl-[protein] + ADP + H(+). The enzyme catalyses [DNA-directed RNA polymerase] + ATP = phospho-[DNA-directed RNA polymerase] + ADP + H(+). The sequence is that of Putative cyclin-dependent kinase F-2 (CDKF-2) from Oryza sativa subsp. japonica (Rice).